The sequence spans 290 residues: TIP41-like protein (290 aa).

This sequence belongs to the TIP41 family. In terms of assembly, interacts with TAP46. In terms of tissue distribution, widely expressed.

Functionally, may be involved in the regulation of the TOR signaling pathway. Indirectly activates the PP2A phosphatase via interaction with its suppressor TAP46. Could play a role in cytoskeleton functions. This is TIP41-like protein from Arabidopsis thaliana (Mouse-ear cress).